Consider the following 437-residue polypeptide: tRNA-2-methylthio-N(6)-dimethylallyladenosine synthase (437 aa).

The region spanning 1–115 (MKVYIETMGC…ISQVIHKEKA (115 aa)) is the MTTase N-terminal domain. [4Fe-4S] cluster contacts are provided by Cys-10, Cys-46, Cys-78, Cys-148, Cys-152, and Cys-155. In terms of domain architecture, Radical SAM core spans 134 to 367 (KKAQIRSLLN…QNRHKEILEE (234 aa)). The 67-residue stretch at 370 to 436 (KLEVGKTHVV…KGRLIATAKG (67 aa)) folds into the TRAM domain.

It belongs to the methylthiotransferase family. MiaB subfamily. As to quaternary structure, monomer. It depends on [4Fe-4S] cluster as a cofactor.

Its subcellular location is the cytoplasm. The enzyme catalyses N(6)-dimethylallyladenosine(37) in tRNA + (sulfur carrier)-SH + AH2 + 2 S-adenosyl-L-methionine = 2-methylsulfanyl-N(6)-dimethylallyladenosine(37) in tRNA + (sulfur carrier)-H + 5'-deoxyadenosine + L-methionine + A + S-adenosyl-L-homocysteine + 2 H(+). Catalyzes the methylthiolation of N6-(dimethylallyl)adenosine (i(6)A), leading to the formation of 2-methylthio-N6-(dimethylallyl)adenosine (ms(2)i(6)A) at position 37 in tRNAs that read codons beginning with uridine. The sequence is that of tRNA-2-methylthio-N(6)-dimethylallyladenosine synthase from Helicobacter pylori (strain Shi470).